The chain runs to 357 residues: DNA replication and repair protein RecF (357 aa).

30–37 (GANGSGKT) is a binding site for ATP.

This sequence belongs to the RecF family.

The protein localises to the cytoplasm. In terms of biological role, the RecF protein is involved in DNA metabolism; it is required for DNA replication and normal SOS inducibility. RecF binds preferentially to single-stranded, linear DNA. It also seems to bind ATP. The protein is DNA replication and repair protein RecF of Salmonella arizonae (strain ATCC BAA-731 / CDC346-86 / RSK2980).